Consider the following 350-residue polypeptide: Protein TRIGALACTOSYLDIACYLGLYCEROL 1, chloroplastic (350 aa).

The disordered stretch occupies residues 67–86 (SMSMLEEETSTENNAPSQEA). Residues 98–117 (YIWRGLSVPIIAGQVVLRIL) traverse the membrane as a helical segment. The Stromal segment spans residues 118–136 (KGKIHWRNTLQQLERTGPK). The chain crosses the membrane as a helical span at residues 137–157 (SLGVCLLTSTFVGMAFTIQFV). Over 158 to 168 (REFTRLGLNRS) the chain is Chloroplast intermembrane. Residues 169–189 (IGGVLALAFSRELSPVITSIV) traverse the membrane as a helical segment. The Stromal segment spans residues 190–229 (VAGRMGSAFAAELGTMQVSEQTDTLRVLGADPIDYLITPR). Residues 230–250 (VIASCLALPFLTLMCFTVGMA) form a helical membrane-spanning segment. Residues 251–288 (SSALLSDAVYGISINIIMDSAHRALRPWDIVSAMIKSQ) lie on the Chloroplast intermembrane side of the membrane. A helical membrane pass occupies residues 289–309 (VFGAIISVISCSWGVTTTGGA). Residues 310–318 (KGVGESTTS) lie on the Stromal side of the membrane. The chain crosses the membrane as a helical span at residues 319-339 (AVVMSLVGIFIADFVLSSFFF). Residues 340-350 (QGAGDSLKNCV) lie on the Chloroplast intermembrane side of the membrane.

Belongs to the MlaE permease family. Permease subunit of the TGD complex, a lipid translocator at the inner chloroplast envelope membrane made of TGD1, TGD2 and TGD3. Interacts with TGD2 and TGD3 with an overall subunit stoichiometry of 2 TGD1, 2 TGD3 and 8 to 12 TGD2. Interacts with TGD5. High levels in green tissues, but low levels in nongreen tissues such as roots.

It localises to the plastid. It is found in the chloroplast inner membrane. In terms of biological role, required during embryogenesis. Permease involved in lipid transfer from the endoplasmic reticulum (ER) to plastids, and necessary for thylakoids formation. The protein is Protein TRIGALACTOSYLDIACYLGLYCEROL 1, chloroplastic of Arabidopsis thaliana (Mouse-ear cress).